We begin with the raw amino-acid sequence, 485 residues long: ATP-dependent rRNA helicase RRP3 (485 aa).

Residues 1-10 (MPVLKKRKLA) are compositionally biased toward basic residues. Positions 1 to 55 (MPVLKKRKLAHTAQPDPIVSDLESSSSEASQQSHDEQLTAANEQDDESPQVQREE) are disordered. The segment covering 20 to 32 (SDLESSSSEASQQ) has biased composition (low complexity). Residues 59-87 (KSFKDLGIIDSLCEACEALGYKSPTPIQA) carry the Q motif motif. Residues 90-261 (IPLALQGRDL…RASLSNPLRV (172 aa)) enclose the Helicase ATP-binding domain. An ATP-binding site is contributed by 103 to 110 (AETGSGKT). A DEAD box motif is present at residues 209 to 212 (DEAD). Positions 285–433 (YKDIYLVYLL…EYKVEKEEVM (149 aa)) constitute a Helicase C-terminal domain. Positions 449–458 (EMKDLHEKRG) are enriched in basic and acidic residues. Residues 449 to 485 (EMKDLHEKRGSRGATLKGRRPAKGAKRGRDEMDREEG) form a disordered region. Over residues 465 to 474 (KGRRPAKGAK) the composition is skewed to basic residues. The segment covering 475-485 (RGRDEMDREEG) has biased composition (basic and acidic residues).

Belongs to the DEAD box helicase family. DDX47/RRP3 subfamily. Interacts with the SSU processome.

The protein localises to the nucleus. The catalysed reaction is ATP + H2O = ADP + phosphate + H(+). Its function is as follows. ATP-dependent rRNA helicase required for pre-ribosomal RNA processing. Involved in the maturation of the 35S-pre-rRNA and to its cleavage to mature 18S rRNA. In Ajellomyces capsulatus (strain NAm1 / WU24) (Darling's disease fungus), this protein is ATP-dependent rRNA helicase RRP3.